A 664-amino-acid chain; its full sequence is METPLLVGLELRCPPHLFNTHSRPSSSLSIPALSLRILTPTAATTSSAVIELPANVAEAPRSKRHSNSYLARKSAISEVQRSSDFLSSLQRLATVLKVQDLNVILRDFGISGRWQDLIQLFEWMQQHGKISVSTYSSCIKFVGAKNVSKALEIYQSIPDESTKINVYICNSILSCLVKNGKLDSCIKLFDQMKRDGLKPDVVTYNTLLAGCIKVKNGYPKAIELIGELPHNGIQMDSVMYGTVLAICASNGRSEEAENFIQQMKVEGHSPNIYHYSSLLNSYSWKGDYKKADELMTEMKSIGLVPNKVMMTTLLKVYIKGGLFDRSRELLSELESAGYAENEMPYCMLMDGLSKAGKLEEARSIFDDMKGKGVRSDGYANSIMISALCRSKRFKEAKELSRDSETTYEKCDLVMLNTMLCAYCRAGEMESVMRMMKKMDEQAVSPDYNTFHILIKYFIKEKLHLLAYQTTLDMHSKGHRLEEELCSSLIYHLGKIRAQAEAFSVYNMLRYSKRTICKELHEKILHILIQGNLLKDAYIVVKDNAKMISQPTLKKFGRAFMISGNINLVNDVLKVLHGSGHKIDQVQFEIAISRYISQPDKKELLLQLLQWMPGQGYVVDSSTRNLILKNSHMFGRLLIAEILSKHHVASRPMIKSRPEQKFRCK.

The N-terminal 72 residues, 1 to 72 (METPLLVGLE…KRHSNSYLAR (72 aa)), are a transit peptide targeting the chloroplast. 9 PPR repeats span residues 165-199 (NVYICNSILSCLVKNGKLDSCIKLFDQMKRDGLKP), 200-235 (DVVTYNTLLAGCIKVKNGYPKAIELIGELPHNGIQM), 236-270 (DSVMYGTVLAICASNGRSEEAENFIQQMKVEGHSP), 271-305 (NIYHYSSLLNSYSWKGDYKKADELMTEMKSIGLVP), 306-340 (NKVMMTTLLKVYIKGGLFDRSRELLSELESAGYAE), 341-375 (NEMPYCMLMDGLSKAGKLEEARSIFDDMKGKGVRS), 376-406 (DGYANSIMISALCRSKRFKEAKELSRDSETT), 411-445 (DLVMLNTMLCAYCRAGEMESVMRMMKKMDEQAVSP), and 446-480 (DYNTFHILIKYFIKEKLHLLAYQTTLDMHSKGHRL).

Belongs to the PPR family. P subfamily.

The protein resides in the plastid. It is found in the chloroplast. The protein is Pentatricopeptide repeat-containing protein At1g10910, chloroplastic of Arabidopsis thaliana (Mouse-ear cress).